The chain runs to 225 residues: Riboflavin kinase (225 aa).

Residues 1 to 89 (MPDIEYLKKL…SRIFSSEPDT (89 aa)) are unknown. A riboflavin kinase region spans residues 90–225 (LELEGNVLKG…LKKQGMEGQK (136 aa)). Position 99 to 104 (99 to 104 (GLGEGQ)) interacts with CDP. Mg(2+) contacts are provided by threonine 128 and asparagine 130. Threonine 185 and glutamate 193 together coordinate FMN. 198-201 (VKLR) is a binding site for CDP.

The protein belongs to the archaeal riboflavin kinase family. Requires Mg(2+) as cofactor.

It carries out the reaction riboflavin + CTP = CDP + FMN + H(+). It functions in the pathway cofactor biosynthesis; FMN biosynthesis; FMN from riboflavin (CTP route): step 1/1. Catalyzes the CTP-dependent phosphorylation of riboflavin (vitamin B2) to form flavin mononucleotide (FMN). In Methanosarcina mazei (strain ATCC BAA-159 / DSM 3647 / Goe1 / Go1 / JCM 11833 / OCM 88) (Methanosarcina frisia), this protein is Riboflavin kinase (ribK).